Reading from the N-terminus, the 655-residue chain is MLPKIFYLSLLPAALGHPHLQPRLDNGLARTPQMGWNTYNHYSCSPNETIVRSNAQALVDLGLASLGYRYVTTDCGWTVADRLSDGSLTWNETLFPEGFPALGKYLHDLDLLFGVYQDSGIKLCGSPPDNVGNYEDQDARTFASWEVDSLKYDNCYSDAATGYPNVNYEPSTSPQPRFANMSRALAAQNRSMVFQVCEWGIDFPARWAPALGHSWRIGNDIIPHWRAIYRTLNQAVPQTSFAGPGQWPDLDMLFVGNDILSIPEEQTHFSLWAILKSPLTIGAALKDDETSINDESLQILKQADIIGYNQDSLGVSASLRRRWTEEGYEVWSGPLSGGRTVAALINWRNESRDLTLDLPDIGLQYAGTVKNIWDGTTAQNVKTSYTAKVQGHGTILLELQDTTASGQYPGDTFATSTGSSTTFESIYGVTTSFRYNITVKLSEASSSSDVKIQSTASNKTITAQVSASGTEASAQIPLLAGSSNSITIVSPQSVDAITITPPNGTYFPNTAFTTIGDADTVSCGAGYCQPVGSKIGNISTNGTARAVIPATAGTKYLAIDYINNDVAFDSAWDWGSNSRNLTVSVNGNKPVRIEVPLSGQHSELFGPGKGWWDTATIGVLTEGWKDGDNDVVIGNEGGESGFTSYGPDFVGLRVL.

The N-terminal stretch at 1–16 is a signal peptide; the sequence is MLPKIFYLSLLPAALG. N-linked (GlcNAc...) asparagine glycans are attached at residues asparagine 47 and asparagine 91. The cysteines at positions 124 and 155 are disulfide-linked. Aspartate 153 functions as the Nucleophile in the catalytic mechanism. 2 N-linked (GlcNAc...) asparagine glycosylation sites follow: asparagine 180 and asparagine 189. Residue 198–202 coordinates substrate; it reads EWGID. Aspartate 220 serves as the catalytic Proton donor. Residues asparagine 349, asparagine 436, asparagine 458, asparagine 503, asparagine 537, asparagine 541, and asparagine 580 are each glycosylated (N-linked (GlcNAc...) asparagine).

The protein belongs to the glycosyl hydrolase 27 family.

The protein localises to the secreted. It catalyses the reaction Hydrolysis of terminal, non-reducing alpha-D-galactose residues in alpha-D-galactosides, including galactose oligosaccharides, galactomannans and galactolipids.. Its function is as follows. Hydrolyzes a variety of simple alpha-D-galactoside as well as more complex molecules such as oligosaccharides and polysaccharides. This Aspergillus flavus (strain ATCC 200026 / FGSC A1120 / IAM 13836 / NRRL 3357 / JCM 12722 / SRRC 167) protein is Probable alpha-galactosidase D (aglD).